The sequence spans 576 residues: Sulfite reductase [NADPH] hemoprotein beta-component (576 aa).

4 residues coordinate [4Fe-4S] cluster: cysteine 435, cysteine 441, cysteine 480, and cysteine 484. Cysteine 484 serves as a coordination point for siroheme.

This sequence belongs to the nitrite and sulfite reductase 4Fe-4S domain family. In terms of assembly, alpha(8)-beta(8). The alpha component is a flavoprotein, the beta component is a hemoprotein. Siroheme is required as a cofactor. It depends on [4Fe-4S] cluster as a cofactor.

The enzyme catalyses hydrogen sulfide + 3 NADP(+) + 3 H2O = sulfite + 3 NADPH + 4 H(+). It functions in the pathway sulfur metabolism; hydrogen sulfide biosynthesis; hydrogen sulfide from sulfite (NADPH route): step 1/1. In terms of biological role, component of the sulfite reductase complex that catalyzes the 6-electron reduction of sulfite to sulfide. This is one of several activities required for the biosynthesis of L-cysteine from sulfate. The chain is Sulfite reductase [NADPH] hemoprotein beta-component from Yersinia pseudotuberculosis serotype O:1b (strain IP 31758).